Consider the following 92-residue polypeptide: Small ribosomal subunit protein bS20 (92 aa).

Disordered stretches follow at residues 1-25 (MALRHKSAQKRHRQSLKRRAINRAK) and 68-92 (HKNAAARKKSRLAKAINKAKAAQQA). Positions 80–92 (AKAINKAKAAQQA) are enriched in low complexity.

The protein belongs to the bacterial ribosomal protein bS20 family.

Binds directly to 16S ribosomal RNA. The polypeptide is Small ribosomal subunit protein bS20 (Deinococcus radiodurans (strain ATCC 13939 / DSM 20539 / JCM 16871 / CCUG 27074 / LMG 4051 / NBRC 15346 / NCIMB 9279 / VKM B-1422 / R1)).